The primary structure comprises 41 residues: Conotoxin Bu22 (41 aa).

A propeptide spanning residues 1–25 (SDRASDGRNAAANDRASDLVALTVR) is cleaved from the precursor. Cystine bridges form between cysteine 27/cysteine 33 and cysteine 28/cysteine 40.

This sequence belongs to the conotoxin A superfamily. In terms of tissue distribution, expressed by the venom duct.

The protein localises to the secreted. The sequence is that of Conotoxin Bu22 from Conus bullatus (Bubble cone).